The primary structure comprises 296 residues: Polyamine aminopropyltransferase (296 aa).

Residues 16-251 enclose the PABS domain; that stretch reads HLWYFEYYTG…GMWSYTFASK (236 aa). Glutamine 46 provides a ligand contact to S-methyl-5'-thioadenosine. Spermidine-binding residues include histidine 77 and aspartate 101. S-methyl-5'-thioadenosine-binding positions include glutamate 121 and 152–153; that span reads NG. Aspartate 170 serves as the catalytic Proton acceptor. Residue 170–173 coordinates spermidine; it reads DSTD.

This sequence belongs to the spermidine/spermine synthase family. As to quaternary structure, homodimer or homotetramer.

The protein localises to the cytoplasm. It carries out the reaction S-adenosyl 3-(methylsulfanyl)propylamine + putrescine = S-methyl-5'-thioadenosine + spermidine + H(+). It participates in amine and polyamine biosynthesis; spermidine biosynthesis; spermidine from putrescine: step 1/1. In terms of biological role, catalyzes the irreversible transfer of a propylamine group from the amino donor S-adenosylmethioninamine (decarboxy-AdoMet) to putrescine (1,4-diaminobutane) to yield spermidine. The sequence is that of Polyamine aminopropyltransferase from Thermotoga petrophila (strain ATCC BAA-488 / DSM 13995 / JCM 10881 / RKU-1).